The sequence spans 382 residues: Neuropeptide Y receptor type 1 (382 aa).

Residues 1 to 33 lie on the Extracellular side of the membrane; sequence MNSTLFSKVENHSIHYNASENSPLLAFENDDCH. Asn-2, Asn-11, and Asn-17 each carry an N-linked (GlcNAc...) asparagine glycan. A helical membrane pass occupies residues 34 to 54; it reads LPLAVIFTLALAYGAVIILGV. Residues 55 to 75 lie on the Cytoplasmic side of the membrane; sequence SGNLALIIIILKQKEMRNVTN. The chain crosses the membrane as a helical span at residues 76–96; that stretch reads ILIVNLSFSDLLVAVMCLPFT. At 97–115 the chain is on the extracellular side; the sequence is FVYTLMDHWVFGETMCKLN. Residues Cys-112 and Cys-197 are joined by a disulfide bond. The chain crosses the membrane as a helical span at residues 116–136; sequence PFVQCVSITVSIFSLVLIAVE. At 137–153 the chain is on the cytoplasmic side; it reads RHQLIINPRGWRPNNRH. The helical transmembrane segment at 154-174 threads the bilayer; the sequence is AYIGITVIWVLAVASSLPFVI. Residues 175-210 are Extracellular-facing; that stretch reads YQILTDEPFQNVSLAAFKDKYVCFDKFPSDSHRLSY. The chain crosses the membrane as a helical span at residues 211–231; it reads TTLLLVLQYFGPLCFIFICYF. Topologically, residues 232–259 are cytoplasmic; sequence KIYIRLKRRNNMMDKIRDSKYRSSETKR. A helical transmembrane segment spans residues 260 to 280; sequence INIMLLSIVVAFAVCWLPLTI. Over 281-298 the chain is Extracellular; it reads FNTVFDWNHQIIATCNHN. A helical membrane pass occupies residues 299 to 319; it reads LLFLLCHLTAMISTCVNPIFY. Residues 320 to 382 lie on the Cytoplasmic side of the membrane; it reads GFLNKNFQRD…KISMNDNEKV (63 aa). Cys-337 is lipidated: S-palmitoyl cysteine. Residues Ser-367 and Ser-375 each carry the phosphoserine modification.

This sequence belongs to the G-protein coupled receptor 1 family. The alpha form is highly expressed in the brain, heart, kidney, spleen, skeletal muscle, and lung, whereas the beta receptor mRNA was not detected in these tissues. However, the beta form is expressed in mouse embryonic developmental stage (7 and 11 days), bone marrow cells and several hematopoietic cell lines.

The protein resides in the cell membrane. Receptor for neuropeptide Y and peptide YY. The protein is Neuropeptide Y receptor type 1 (Npy1r) of Mus musculus (Mouse).